Here is a 182-residue protein sequence, read N- to C-terminus: Putative manganese efflux pump MntP (182 aa).

The next 6 membrane-spanning stretches (helical) occupy residues 6–26 (LIPL…VSLG), 37–57 (ILYI…IGMV), 71–91 (HFAG…SSIL), 101–121 (IGIS…SVGL), 131–151 (VITI…GLFI), and 162–182 (YGEI…LFPI).

This sequence belongs to the MntP (TC 9.B.29) family.

It is found in the cell membrane. Its function is as follows. Probably functions as a manganese efflux pump. The polypeptide is Putative manganese efflux pump MntP (Bacillus cereus (strain AH187)).